We begin with the raw amino-acid sequence, 558 residues long: MAKLLSCVLGPRLYKIYRERDTDRAATSVPETPTAVPAASSSSWDSYYQPRALEKHADSILALASVFWSISYYSSPFAFFYLYRKGYLSLSKVVPFSHYAGTLLVLLAGVACLRGIGRWTNPQYRQFITILEATHRNQSAENKRQLANYNFDFRSWPVDFHWEEPSSRKGSRGGPSRRGVALLRPEPLHRGTADTFLNRVKKLPCQITSYLVAHTLGRRMLYPGSVYLLQKALMPVLLQGQARLVEECNGRRAKLLACDGNEIDTMFVDRRGTAEPQGQKLVICCEGNAGFYEVGCVSTPLEAGYSVLGWNHPGFAGSTGVPFPQNEANAMDVVVQFAIHRLGFQPQDIVIYAWSIGGFTATWAAMSYPDISAVILDASFDDLVPLALKVMPDSWRALVTRTVRQHLNLNNAEQLCRFQGPVLLVRRTKDEIITTTVPEDIMSNRGNDLLLKLLQFRYPRVMTEEGLRAVRQWLEASSQLEEASIYSRWEVDEDWCVSVLRSYQAEHGPDFPWSVGEDMSVDGRRQLALFLARKHLHNFEATHCTPLPAQHFQMPWCL.

Transmembrane regions (helical) follow at residues 60–80 (ILALASVFWSISYYSSPFAFF) and 93–113 (VVPFSHYAGTLLVLLAGVACL). At 114 to 558 (RGIGRWTNPQ…AQHFQMPWCL (445 aa)) the chain is on the cytoplasmic side. Residues 281 to 407 (LVICCEGNAG…LVTRTVRQHL (127 aa)) form the AB hydrolase-1 domain. Catalysis depends on charge relay system residues Ser-355, Asp-430, and His-507.

Belongs to the AB hydrolase superfamily. ABHD16 family.

It localises to the membrane. The enzyme catalyses 1-heptadecanoyl-2-(5Z,8Z,11Z,14Z-eicosatetraenoyl)-sn-glycero-3-phosphoserine + H2O = 1-heptadecanoyl-sn-glycero-3-phosphoserine + (5Z,8Z,11Z,14Z)-eicosatetraenoate + H(+). It carries out the reaction 1-hexadecanoyl-2-(9Z-octadecenoyl)-sn-glycero-3-phospho-L-serine + H2O = 1-hexadecanoyl-sn-glycero-3-phospho-L-serine + (9Z)-octadecenoate + H(+). It catalyses the reaction 1-octadecanoyl-2-(9Z,12Z-octadecadienoyl)-sn-glycero-3-phosphoserine + H2O = 1-octadecanoyl-sn-glycero-3-phosphoserine + (9Z,12Z)-octadecadienoate + H(+). The catalysed reaction is 1-heptadecanoyl-2-(5Z,8Z,11Z,14Z-eicosatetraenoyl)-sn-glycero-3-phosphocholine + H2O = 1-heptadecanoyl-sn-glycero-3-phosphocholine + (5Z,8Z,11Z,14Z)-eicosatetraenoate + H(+). The enzyme catalyses 1-hexadecanoyl-2-(9Z-octadecenoyl)-sn-glycero-3-phosphoglycerol + H2O = 1-hexadecanoyl-sn-glycero-3-phosphoglycerol + (9Z)-octadecenoate + H(+). It carries out the reaction 1-hexadecanoyl-2-(9Z-octadecenoyl)-sn-glycero-3-phospho-(1D-myo-inositol) + H2O = 1-hexadecanoyl-sn-glycero-3-phospho-(1D-myo-inositol) + (9Z)-octadecenoate + H(+). It catalyses the reaction 1-heptadecanoyl-2-(5Z,8Z,11Z,14Z-eicosatetraenoyl)-sn-glycero-3-phosphoethanolamine + H2O = 1-heptadecanoyl-sn-glycero-3-phosphoethanolamine + (5Z,8Z,11Z,14Z)-eicosatetraenoate + H(+). The catalysed reaction is 1-hexadecanoyl-2-(9Z-octadecenoyl)-sn-glycero-3-phospho-(1'-sn-glycerol) + H2O = 1-hexadecanoyl-sn-glycero-3-phospho-(1'-sn-glycerol) + (9Z)-octadecenoate + H(+). The enzyme catalyses Hydrolyzes glycerol monoesters of long-chain fatty acids.. It carries out the reaction 1-tetradecanoylglycerol + H2O = tetradecanoate + glycerol + H(+). It catalyses the reaction 2-hexadecanoylglycerol + H2O = glycerol + hexadecanoate + H(+). The catalysed reaction is 1-(9Z-octadecenoyl)-glycerol + H2O = glycerol + (9Z)-octadecenoate + H(+). The enzyme catalyses 2-(9Z-octadecenoyl)-glycerol + H2O = glycerol + (9Z)-octadecenoate + H(+). It carries out the reaction 2-(9Z,12Z-octadecadienoyl)-glycerol + H2O = (9Z,12Z)-octadecadienoate + glycerol + H(+). It catalyses the reaction 1-(5Z,8Z,11Z,14Z-eicosatetraenoyl)-glycerol + H2O = glycerol + (5Z,8Z,11Z,14Z)-eicosatetraenoate + H(+). The catalysed reaction is 2-(5Z,8Z,11Z,14Z-eicosatetraenoyl)-glycerol + H2O = glycerol + (5Z,8Z,11Z,14Z)-eicosatetraenoate + H(+). The enzyme catalyses prostaglandin D2-1-glycerol ester + H2O = prostaglandin D2 + glycerol + H(+). It carries out the reaction 2-glyceryl-15-deoxy-Delta(12,14)-prostaglandin J2 + H2O = 15-deoxy-Delta(12,14)-prostaglandin J2 + glycerol + H(+). It catalyses the reaction 1-(9Z,12Z-octadecadienoyl)-glycerol + H2O = (9Z,12Z)-octadecadienoate + glycerol + H(+). In terms of biological role, phosphatidylserine (PS) lipase that mediates the hydrolysis of phosphatidylserine to generate lysophosphatidylserine (LPS). LPS constitutes a class of signaling lipids that regulates immunological and neurological processes. Has no activity towards diacylglycerol, triacylglycerol or lysophosphatidylserine lipase. Also has monoacylglycerol lipase activity, with preference for 1-(9Z,12Z-octadecadienoyl)-glycerol (1-LG) and 2-glyceryl-15-deoxy-Delta(12,14)-prostaglandin J2 (15d-PGJ(2)-G). This chain is Phosphatidylserine lipase ABHD16A, found in Rattus norvegicus (Rat).